The following is a 1789-amino-acid chain: Genome polyprotein (1789 aa).

Positions Met-1 to Lys-25 are disordered. Positions Met-1–Arg-183 are interaction with host MAP1LC3A/LC3. Positions Ala-12 to Ser-23 are enriched in low complexity. The segment at Ser-184 to Gln-398 is interaction with NTPase. Residues His-301 to Gln-398 form an interaction with NS4 region. 2 host ER membrane association regions span residues Lys-318 to Asn-349 and Thr-360 to Gln-398. The interval Gly-399 to Ala-574 is interaction with NS1-2 and NS4 and homooligomerization. An SF3 helicase domain is found at Arg-532–Asp-697. Residue Gly-560–Thr-567 participates in ATP binding. Positions Ala-651–Asp-756 are important for mitochondrion targeting. Residues Tyr-826–Gly-832 are functions as endoplasmic reticulum export signal. Residues Arg-865 to Pro-910 are host membrane association. The interval Asp-958 to Ala-981 is disordered. Over residues Lys-966 to Lys-976 the composition is skewed to basic residues. Positions Asp-989–Glu-994 are acidic. Residue Tyr-992 is modified to O-(5'-phospho-RNA)-tyrosine. The interval Trp-1084–Glu-1100 is interaction with host EIF4G. The Peptidase C37 domain maps to Ala-1101–Glu-1281. Residues His-1130, Glu-1154, and Cys-1239 each act as for 3CLpro activity in the active site. A RdRp catalytic domain is found at Lys-1516–Arg-1637. Residues Asp-1520, Asp-1522, Asp-1624, and Glu-1625 each contribute to the Mg(2+) site.

As to quaternary structure, homodimer. Homooligomer. Interacts with NTPase; this interaction increases the proapoptotic activity of the NTPase and is crucial for the formation of the viral replication complex. Interacts with NS4; this interaction is crucial for the formation of the viral replication complex. Interacts (via N-terminus) with host VAPA. Interacts with host MAP1LC3A/LC3; this interaction does not seem to be linked to host autophagy, but rather plays a role in the formation of viral factories. In terms of assembly, homooligomer. Interacts with NS1-2; this interaction increases the proapoptotic activity of the NTPase and is crucial for the formation of the viral replication complex. Interacts with NS4; this interaction increases the proapoptotic activity of the NTPase. Homodimer. Monomer; in solution. As to quaternary structure, interacts with NTPase; this interaction increases the proapoptotic activity of the NTPase. Interacts with NS1-2; this interaction is crucial for the formation of the viral replication complex. In terms of assembly, monomer. Interacts with the RNA-directed RNA polymerase; this interaction induces the multimerization of the RdRp and enhances its activity. Interacts with host IEF4G1; this interaction plays a role in translation of viral proteins. Homohexamer; also forms fibrous hexameric oligomer. Interacts with the viral genome-linked protein; this interaction induces the multimerization of the RdRp and enhances its activity. Requires Mg(2+) as cofactor. The cofactor is Mn(2+). Post-translationally, specific enzymatic cleavages in vivo yield mature proteins. 3CLpro is first autocatalytically cleaved, then processes the whole polyprotein. NS1/2-3 and NS3-4 sites are cleaved rapidly and NS4-5, NS5-6, and NS6-7 sites are processed subsequently and less efficiently. In terms of processing, VPg is uridylylated by the polymerase and is covalently attached to the 5'-end of the polyadenylated genomic and subgenomic RNAs. This uridylylated form acts as a nucleotide-peptide primer for the polymerase. Cleaved by host CASP3/caspase 3 at 18-22 h.p.i. The cleavage allows NS1 secretion, which is essential for intestinal infection and resistance to IFN-lambda.

It localises to the host Golgi apparatus membrane. Its subcellular location is the secreted. The protein localises to the host endoplasmic reticulum membrane. It is found in the host cytoplasm. The protein resides in the host perinuclear region. It carries out the reaction a ribonucleoside 5'-triphosphate + H2O = a ribonucleoside 5'-diphosphate + phosphate + H(+). The enzyme catalyses Endopeptidase with a preference for cleavage when the P1 position is occupied by Glu-|-Xaa and the P1' position is occupied by Gly-|-Yaa.. It catalyses the reaction RNA(n) + a ribonucleoside 5'-triphosphate = RNA(n+1) + diphosphate. Inhibited by the chemical compound K36/GC376, which covalently binds to the nucleophilic cysteine residue. Inhibited by various macrocyclic inhibitors. Its activity is regulated as follows. Inhibited by the guanidine salt GuHCl. Induces the proliferation of the host smooth ER membranes forming long tubular structures. These remodeled membranes probably form the viral factories that contain the replication complex. Induces the disassembly of host Golgi. May play a role in viral replication by interacting with host VAPA, a vesicle-associated membrane protein that plays a role in SNARE-mediated vesicle fusion. This interaction may target replication complex to intracellular membranes. Its function is as follows. Displays NTPase activity and RNA helix-unwinding activity. Displays RNA chaperone-like activity and destabilizes dsRNA. Induces the formation of convoluted membranes derived from the host ER. These remodeled membranes probably form the viral factories that contain the replication complex. Initiates host cell death by targeting the mitochondrial outer membrane, leading to the permeabilization of mitochondria, programmed host cell death and viral egress. Probably plays a role in preventing the assembly of host stress granules. In terms of biological role, probable key protein responsible for the formation of membrane alterations by the virus. Induces the formation of convoluted membranes derived from the host ER. These remodeled membranes probably form the viral factories that contain the replication complex. May play a role in targeting replication complex to intracellular membranes. Induces the disassembly of host Golgi and antagonism of Golgi-dependent cellular protein secretion, probably via the mislocalization of COPII-coated vesicles. Functionally, viral genome-linked protein is covalently linked to the 5'-end of the positive-strand, negative-strand genomic RNAs and subgenomic RNA. Acts as a genome-linked replication primer. May recruit ribosome to viral RNA thereby promoting viral proteins translation. Interacts with host translation initiation complex to allow the translation of viral proteins. Induces the formation of aggregates of RNA-directed RNA polymerase in the presence of RNA. Through its interaction with the viral RNA-directed RNA polymerase, plays a crucial role in enhancing the polymerase activity. Processes the polyprotein. 3CLpro-RdRp is first released by autocleavage, then all other proteins are cleaved. May cleave host polyadenylate-binding protein thereby inhibiting cellular translation. Its function is as follows. Replicates genomic and antigenomic RNA by recognizing replications specific signals. Also transcribes a subgenomic mRNA by initiating RNA synthesis internally on antigenomic RNA. This sgRNA codes for structural proteins. Catalyzes the covalent attachment VPg with viral RNAs. The chain is Genome polyprotein from Norovirus (strain Human/NoV/United States/Norwalk/1968/GI) (Hu/NV/NV/1968/US).